The primary structure comprises 134 residues: ATP synthase epsilon chain, chloroplastic (134 aa).

Belongs to the ATPase epsilon chain family. In terms of assembly, F-type ATPases have 2 components, CF(1) - the catalytic core - and CF(0) - the membrane proton channel. CF(1) has five subunits: alpha(3), beta(3), gamma(1), delta(1), epsilon(1). CF(0) has three main subunits: a, b and c.

It localises to the plastid. The protein localises to the chloroplast thylakoid membrane. Produces ATP from ADP in the presence of a proton gradient across the membrane. The protein is ATP synthase epsilon chain, chloroplastic of Gracilaria tenuistipitata var. liui (Red alga).